Consider the following 211-residue polypeptide: Large ribosomal subunit protein bL25 (211 aa).

It belongs to the bacterial ribosomal protein bL25 family. CTC subfamily. As to quaternary structure, part of the 50S ribosomal subunit; part of the 5S rRNA/L5/L18/L25 subcomplex. Contacts the 5S rRNA. Binds to the 5S rRNA independently of L5 and L18.

This is one of the proteins that binds to the 5S RNA in the ribosome where it forms part of the central protuberance. This chain is Large ribosomal subunit protein bL25, found in Anaplasma phagocytophilum (strain HZ).